Reading from the N-terminus, the 102-residue chain is Polymeric immunoglobulin receptor (102 aa).

In terms of assembly, interacts (mainly via CDR1-like domain) with dimeric IgA. Interacts (mainly via CDR2-like domain) with pentameric IgM. Either free or part of the secretory IgA (sIgA) complex that consists of two, four or five IgA monomers, and two additional non-Ig polypeptides, namely the JCHAIN and the secretory component (the proteolytic product of PIGR). Free secretory component interacts with bacterial antigens toxA of C.difficile and eaeA of E.coli. In terms of processing, N-glycosylated. N-glycosylation is required for anchoring IgA molecules to mucus, but is not necessary for Ig binding.

The protein localises to the cell membrane. It localises to the secreted. Mediates selective transcytosis of polymeric IgA and IgM across mucosal epithelial cells. Binds polymeric IgA and IgM at the basolateral surface of epithelial cells. The complex is then transported across the cell to be secreted at the apical surface. During this process, a cleavage occurs that separates the extracellular (known as the secretory component) from the transmembrane segment. Through its N-linked glycans ensures anchoring of secretory IgA (sIgA) molecules to mucus lining the epithelial surface to neutralize extracellular pathogens. On its own (free form) may act as a non-specific microbial scavenger to prevent pathogen interaction with epithelial cells. The protein is Polymeric immunoglobulin receptor (PIGR) of Sus scrofa (Pig).